Reading from the N-terminus, the 151-residue chain is Ribosome maturation factor RimP (151 aa).

The protein belongs to the RimP family.

The protein localises to the cytoplasm. In terms of biological role, required for maturation of 30S ribosomal subunits. In Aliivibrio fischeri (strain MJ11) (Vibrio fischeri), this protein is Ribosome maturation factor RimP.